The primary structure comprises 347 residues: MSFTEKPAVTKERKEFYSKLESHDLAPLWEVLNEVVTTKPKSNCAPHLWEFEVAKEFLMEAGTLITAKEAERRVLILENPGLKGLSRITTSLYAGLQLILPGEVAPTHRHSQSALRFVVDGGGACTSVDGERTTMQVGDFVITPPWAWHDHVNDSDKPMIWMDGLDLPMVTLFDTSFAEGYGEDIQEITRPNGDSLARYGANMLPVDFKQKGLSSPIFNYPYERSREALEAMKKANEWDPCHGLKMQYINPLDGMAAMPTISSFIQLLPKEFRTQTYRSTDATVFSVIEGQGKTRIGDKVFFWKAKDTFVVPSWYPVEHEASSDAVLFSYSDRVAQQKLGFWRESRN.

In terms of domain architecture, Cupin type-2 spans L96–D163.

This sequence belongs to the gentisate 1,2-dioxygenase family. As to quaternary structure, homotetramer. Fe(2+) serves as cofactor.

It carries out the reaction 2,5-dihydroxybenzoate + O2 = 3-maleylpyruvate + H(+). Its activity is regulated as follows. Completely inhibited by the presence of 5 mM Cu(2+). Partially inhibited with 5 mM Mn(2+), Zn(2+) or EDTA. Functionally, involved in the degradation of gentisate. Catalyzes the conversion of gentisate (2,5-dihydroxybenzoate) to maleylpyruvate. Exhibits broad substrate specificities towards alkyl and halogenated gentisates. The chain is Gentisate 1,2 dioxygenase 1 from Aquipseudomonas alcaligenes (Pseudomonas alcaligenes).